The following is a 150-amino-acid chain: D-aminoacyl-tRNA deacylase (150 aa).

A Gly-cisPro motif, important for rejection of L-amino acids motif is present at residues 138-139 (GP).

The protein belongs to the DTD family. Homodimer.

It localises to the cytoplasm. It catalyses the reaction glycyl-tRNA(Ala) + H2O = tRNA(Ala) + glycine + H(+). It carries out the reaction a D-aminoacyl-tRNA + H2O = a tRNA + a D-alpha-amino acid + H(+). An aminoacyl-tRNA editing enzyme that deacylates mischarged D-aminoacyl-tRNAs. Also deacylates mischarged glycyl-tRNA(Ala), protecting cells against glycine mischarging by AlaRS. Acts via tRNA-based rather than protein-based catalysis; rejects L-amino acids rather than detecting D-amino acids in the active site. By recycling D-aminoacyl-tRNA to D-amino acids and free tRNA molecules, this enzyme counteracts the toxicity associated with the formation of D-aminoacyl-tRNA entities in vivo and helps enforce protein L-homochirality. The sequence is that of D-aminoacyl-tRNA deacylase from Sorangium cellulosum (strain So ce56) (Polyangium cellulosum (strain So ce56)).